The primary structure comprises 647 residues: Probable squalene--hopene cyclase (647 aa).

The stretch at 67–108 (EAKIGNYLRRTQGAHGGWPLVHDGPFDMSASVKSYFALKMIG) is one PFTB 1 repeat. The active-site Proton donor is aspartate 388. PFTB repeat units lie at residues 413–454 (IARG…GALL) and 530–577 (IRKA…ALLG).

Belongs to the terpene cyclase/mutase family.

The catalysed reaction is squalene = hop-22(29)-ene. It carries out the reaction squalene + H2O = hopan-22-ol. Its pathway is secondary metabolite biosynthesis; hopanoid biosynthesis. In terms of biological role, catalyzes the cyclization of squalene into hopene. Probably part of an operon y4aABCD involved in the synthesis of an isoprenoid compound. This Sinorhizobium fredii (strain NBRC 101917 / NGR234) protein is Probable squalene--hopene cyclase (shc).